The following is a 199-amino-acid chain: Chaperone protein TorD (199 aa).

Belongs to the TorD/DmsD family. TorD subfamily.

It is found in the cytoplasm. Involved in the biogenesis of TorA. Acts on TorA before the insertion of the molybdenum cofactor and, as a result, probably favors a conformation of the apoenzyme that is competent for acquiring the cofactor. The sequence is that of Chaperone protein TorD from Escherichia coli (strain ATCC 8739 / DSM 1576 / NBRC 3972 / NCIMB 8545 / WDCM 00012 / Crooks).